We begin with the raw amino-acid sequence, 217 residues long: ATP phosphoribosyltransferase (217 aa).

The protein belongs to the ATP phosphoribosyltransferase family. Short subfamily. Heteromultimer composed of HisG and HisZ subunits.

Its subcellular location is the cytoplasm. The catalysed reaction is 1-(5-phospho-beta-D-ribosyl)-ATP + diphosphate = 5-phospho-alpha-D-ribose 1-diphosphate + ATP. It functions in the pathway amino-acid biosynthesis; L-histidine biosynthesis; L-histidine from 5-phospho-alpha-D-ribose 1-diphosphate: step 1/9. Its function is as follows. Catalyzes the condensation of ATP and 5-phosphoribose 1-diphosphate to form N'-(5'-phosphoribosyl)-ATP (PR-ATP). Has a crucial role in the pathway because the rate of histidine biosynthesis seems to be controlled primarily by regulation of HisG enzymatic activity. The chain is ATP phosphoribosyltransferase from Polaromonas naphthalenivorans (strain CJ2).